The primary structure comprises 443 residues: Tubulin beta-1 chain (443 aa).

Residues glutamine 11, glutamate 69, serine 138, glycine 142, threonine 143, glycine 144, asparagine 204, and asparagine 226 each coordinate GTP. Residue glutamate 69 coordinates Mg(2+). Residues 424–443 (QYQDATAEREGEYEEDYDEA) are disordered. Residues 434–443 (GEYEEDYDEA) are compositionally biased toward acidic residues.

The protein belongs to the tubulin family. As to quaternary structure, dimer of alpha and beta chains. A typical microtubule is a hollow water-filled tube with an outer diameter of 25 nm and an inner diameter of 15 nM. Alpha-beta heterodimers associate head-to-tail to form protofilaments running lengthwise along the microtubule wall with the beta-tubulin subunit facing the microtubule plus end conferring a structural polarity. Microtubules usually have 13 protofilaments but different protofilament numbers can be found in some organisms and specialized cells. It depends on Mg(2+) as a cofactor.

It is found in the cytoplasm. The protein resides in the cytoskeleton. Tubulin is the major constituent of microtubules, a cylinder consisting of laterally associated linear protofilaments composed of alpha- and beta-tubulin heterodimers. Microtubules grow by the addition of GTP-tubulin dimers to the microtubule end, where a stabilizing cap forms. Below the cap, tubulin dimers are in GDP-bound state, owing to GTPase activity of alpha-tubulin. This is Tubulin beta-1 chain (TUBB1) from Anemia phyllitidis (Fern).